The sequence spans 570 residues: Double-stranded RNA-binding protein Staufen homolog 2 (570 aa).

The DRBM 1 domain maps to 8–75 (TAMCLVNELA…ANKALTESTL (68 aa)). 2 disordered regions span residues 71 to 94 (TEST…PGSI) and 181 to 203 (NEPI…DDKD). Residues 83-94 (PKSNVNNNPGSI) show a composition bias toward polar residues. A DRBM 2 domain is found at 95 to 181 (TPTVELNGLA…AMKALQALQN (87 aa)). Position 188 is a phosphoserine (Ser188). Residues 194-203 (SGKDVDDDKD) show a composition bias toward basic and acidic residues. 2 consecutive DRBM domains span residues 207-274 (SEIS…ELKK) and 307-375 (NPIS…QLGY). Short sequence motifs (nuclear localization signal) lie at residues 273 to 291 (KKLP…FKKR) and 373 to 412 (LGYK…PKGI). The interval 381–570 (LQDQLEKTGE…QDCKKSNSAV (190 aa)) is required for dendritic transport. The tract at residues 387–409 (KTGENKGWSGPKPGFPEPTNNTP) is disordered. At Ser395 the chain carries Phosphoserine. Residue Thr405 is modified to Phosphothreonine. Residues Ser416, Ser426, Ser440, Ser455, and Ser492 each carry the phosphoserine modification. Positions 528-570 (DGAMNIEKGSLEKQAKHLREKADNNQAPPGSIAQDCKKSNSAV) are disordered. The span at 536–550 (GSLEKQAKHLREKAD) shows a compositional bias: basic and acidic residues.

Interacts with the exportin XPO5. This requires RNA and RAN bound to GTP. Interacts with microtubules. Isoform 2 and isoform 3 may also interact with ribosomes, and this association is independent of translation. Identified in a mRNP complex, at least composed of DHX9, DDX3X, ELAVL1, HNRNPU, IGF2BP1, ILF3, PABPC1, PCBP2, PTBP2, STAU1, STAU2, SYNCRIP and YBX1. Interacts with TRIM71 (via NHL repeats) in an RNA-dependent manner.

The protein localises to the cytoplasm. The protein resides in the nucleus. It is found in the nucleolus. Its subcellular location is the endoplasmic reticulum. In terms of biological role, RNA-binding protein required for the microtubule-dependent transport of neuronal RNA from the cell body to the dendrite. As protein synthesis occurs within the dendrite, the localization of specific mRNAs to dendrites may be a prerequisite for neurite outgrowth and plasticity at sites distant from the cell body. The sequence is that of Double-stranded RNA-binding protein Staufen homolog 2 (STAU2) from Homo sapiens (Human).